A 447-amino-acid chain; its full sequence is Na(+)-translocating NADH-quinone reductase subunit A (447 aa).

Belongs to the NqrA family. Composed of six subunits; NqrA, NqrB, NqrC, NqrD, NqrE and NqrF.

It carries out the reaction a ubiquinone + n Na(+)(in) + NADH + H(+) = a ubiquinol + n Na(+)(out) + NAD(+). NQR complex catalyzes the reduction of ubiquinone-1 to ubiquinol by two successive reactions, coupled with the transport of Na(+) ions from the cytoplasm to the periplasm. NqrA to NqrE are probably involved in the second step, the conversion of ubisemiquinone to ubiquinol. In Cellvibrio japonicus (strain Ueda107) (Pseudomonas fluorescens subsp. cellulosa), this protein is Na(+)-translocating NADH-quinone reductase subunit A.